We begin with the raw amino-acid sequence, 184 residues long: Probable DNA-directed RNA polymerase subunit delta (184 aa).

In terms of domain architecture, HTH HARE-type spans 14–81 (LSMIEVARAI…GENVWALRSW (68 aa)). Disordered regions lie at residues 88–107 (DEEV…KHHK) and 118–184 (GDDD…DEDD). The segment covering 118 to 164 (GDDDIIDYDNDDPEDDDLDAATDDSDDDYSDDDSDYDEDNDDADDVL) has biased composition (acidic residues).

It belongs to the RpoE family. As to quaternary structure, RNAP is composed of a core of 2 alpha, a beta and a beta' subunits. The core is associated with a delta subunit and one of several sigma factors.

In terms of biological role, participates in both the initiation and recycling phases of transcription. In the presence of the delta subunit, RNAP displays an increased specificity of transcription, a decreased affinity for nucleic acids, and an increased efficiency of RNA synthesis because of enhanced recycling. The polypeptide is Probable DNA-directed RNA polymerase subunit delta (Lactobacillus acidophilus (strain ATCC 700396 / NCK56 / N2 / NCFM)).